A 534-amino-acid chain; its full sequence is CTP synthase (534 aa).

An amidoligase domain region spans residues 1 to 265 (MKYIVVTGGV…TTQLMKHLRL (265 aa)). Ser-12 contributes to the CTP binding site. Ser-12 is a UTP binding site. 13-18 (GLGKGI) serves as a coordination point for ATP. Residue Tyr-53 participates in L-glutamine binding. Residue Asp-70 coordinates ATP. Mg(2+)-binding residues include Asp-70 and Glu-140. Residues 147–149 (DIE), 186–191 (KTKPTQ), and Lys-222 contribute to the CTP site. UTP contacts are provided by residues 186–191 (KTKPTQ) and Lys-222. The Glutamine amidotransferase type-1 domain occupies 289–530 (KLAIVGKYTN…VRAMCKYRKE (242 aa)). Gly-352 serves as a coordination point for L-glutamine. Residue Cys-379 is the Nucleophile; for glutamine hydrolysis of the active site. Residues 380-383 (LGMQ), Glu-403, and Arg-460 contribute to the L-glutamine site. Active-site residues include His-503 and Glu-505.

Belongs to the CTP synthase family. As to quaternary structure, homotetramer.

The catalysed reaction is UTP + L-glutamine + ATP + H2O = CTP + L-glutamate + ADP + phosphate + 2 H(+). It catalyses the reaction L-glutamine + H2O = L-glutamate + NH4(+). It carries out the reaction UTP + NH4(+) + ATP = CTP + ADP + phosphate + 2 H(+). The protein operates within pyrimidine metabolism; CTP biosynthesis via de novo pathway; CTP from UDP: step 2/2. Its activity is regulated as follows. Allosterically activated by GTP, when glutamine is the substrate; GTP has no effect on the reaction when ammonia is the substrate. The allosteric effector GTP functions by stabilizing the protein conformation that binds the tetrahedral intermediate(s) formed during glutamine hydrolysis. Inhibited by the product CTP, via allosteric rather than competitive inhibition. Functionally, catalyzes the ATP-dependent amination of UTP to CTP with either L-glutamine or ammonia as the source of nitrogen. Regulates intracellular CTP levels through interactions with the four ribonucleotide triphosphates. The protein is CTP synthase of Methanosarcina mazei (strain ATCC BAA-159 / DSM 3647 / Goe1 / Go1 / JCM 11833 / OCM 88) (Methanosarcina frisia).